A 1312-amino-acid chain; its full sequence is DNA repair protein RAD50.L (1312 aa).

ATP is bound by residues Arg-13, Asn-38, Gly-39, Gly-41, Lys-42, Thr-43, Thr-44, Val-67, Asp-69, and Gln-159. Residue Thr-43 participates in Mg(2+) binding. Residue Gln-159 coordinates Mg(2+). Coiled-coil stretches lie at residues 203-342 (VREY…LNRE), 415-558 (LREF…IKSR), and 587-628 (INQT…FEEK). The Zinc-hook domain occupies 635 to 734 (SQDFDSDLSR…RKDDMMELKP (100 aa)). Zn(2+) contacts are provided by Cys-681 and Cys-684. Positions 712 to 1070 (LKSAEGELKR…ENKSESLKTN (359 aa)) form a coiled coil.

Belongs to the SMC family. RAD50 subfamily. Component of the MRN complex composed of two heterodimers RAD50 and MRE11 associated with a single NBN. The cofactor is Zn(2+).

It is found in the nucleus. It localises to the chromosome. The protein localises to the telomere. It carries out the reaction ATP + H2O = ADP + phosphate + H(+). In terms of biological role, component of the MRN complex, which plays a central role in double-strand break (DSB) repair, DNA recombination, maintenance of telomere integrity and meiosis. The MRN complex is involved in the repair of DNA double-strand breaks (DSBs) via homologous recombination (HR), an error-free mechanism which primarily occurs during S and G2 phases. The complex (1) mediates the end resection of damaged DNA, which generates proper single-stranded DNA, a key initial steps in HR, and is (2) required for the recruitment of other repair factors and efficient activation of ATM and ATR upon DNA damage. The MRN complex possesses single-strand endonuclease activity and double-strand-specific 3'-5' exonuclease activity, which are provided by mre11, to initiate end resection, which is required for single-strand invasion and recombination. Within the complex, rad50 is both required to bind DNA ends and hold them in close proximity and regulate the activity of MRE11. Rad50 provides an ATP-dependent control of MRE11 by positioning DNA ends into the mre11 active site: ATP-binding induces a large structural change from an open form with accessible MRE11 nuclease sites into a closed form. The MRN complex is also required for DNA damage signaling via activation of the atm and atr kinases: the nuclease activity of mre11 is not required to activate ATM and ATR. The MRN complex promotes recruitment of topbp1 to DNA damage sites. The MRN complex and rbbp8/CtIP are also required for chromosome alignment during metaphase. In Xenopus laevis (African clawed frog), this protein is DNA repair protein RAD50.L.